Here is a 277-residue protein sequence, read N- to C-terminus: Large ribosomal subunit protein mL46 (277 aa).

K228 bears the N6-acetyllysine mark.

It belongs to the mitochondrion-specific ribosomal protein mL46 family. In terms of assembly, component of the mitochondrial ribosome large subunit (39S) which comprises a 16S rRNA and about 50 distinct proteins.

The protein resides in the mitochondrion. This chain is Large ribosomal subunit protein mL46 (MRPL46), found in Bos taurus (Bovine).